The sequence spans 503 residues: Chromodomain Y-like protein 2 (503 aa).

Residues 7–67 (YEVERIVDKR…LHLSKDKRVK (61 aa)) enclose the Chromo domain. Residues 66–177 (VKSGKQAGAS…GNGSHQPDLE (112 aa)) form a disordered region. Positions 88-98 (RLSHRPLEPGK) are enriched in basic and acidic residues. Positions 101 to 120 (PSSHKRKRVNSPLSRPKKGS) are enriched in basic residues. A compositionally biased stretch (polar residues) spans 130 to 140 (KTVSYRTTPSG).

In terms of assembly, interacts (via chromo domain) with histone H3K9me3.

Its subcellular location is the nucleus. The polypeptide is Chromodomain Y-like protein 2 (Cdyl2) (Mus musculus (Mouse)).